The following is a 352-amino-acid chain: Alpha-2-HS-glycoprotein (352 aa).

An N-terminal signal peptide occupies residues Met-1 to Ser-18. One can recognise a Cystatin fetuin-A-type 1 domain in the interval Ala-19–His-133. Disulfide bonds link Cys-32-Cys-343, Cys-89-Cys-100, Cys-114-Cys-132, Cys-146-Cys-149, Cys-208-Cys-219, and Cys-230-Cys-247. Asn-99 is a glycosylation site (N-linked (GlcNAc...) asparagine). Ser-134 carries the post-translational modification Phosphoserine. A Phosphothreonine modification is found at Thr-135. A Phosphoserine modification is found at Ser-138. Positions Lys-144 to Phe-250 constitute a Cystatin fetuin-A-type 2 domain. N-linked (GlcNAc...) asparagine glycans are attached at residues Asn-156 and Asn-176. Residues Pro-256–Pro-273 are compositionally biased toward low complexity. Positions Pro-256–Pro-280 are disordered. Phosphoserine is present on residues Ser-309, Ser-313, Ser-316, and Ser-318. Residues Gly-319 to Pro-338 are disordered. A compositionally biased stretch (low complexity) spans Gly-328–Pro-338.

The protein belongs to the fetuin family. In terms of processing, undergoes complex post-translational modification involving N-glycosylation, and addition of fucose and sialic acid residues. Phosphorylation occurs at a serine residue. Phosphorylated by FAM20C in the extracellular medium. Synthesized in liver and secreted by the hepatocytes in the blood.

The protein resides in the secreted. Its function is as follows. Could inhibit both insulin-receptor tyrosine kinase activity and insulin-stimulated receptor autophosphorylation and, concomitantly, antagonize the mitogenic effect of the hormone in cultured rat hepatoma cells. The sequence is that of Alpha-2-HS-glycoprotein (Ahsg) from Rattus norvegicus (Rat).